A 687-amino-acid polypeptide reads, in one-letter code: DNA-directed RNA polymerase subunit beta' (687 aa).

Residues C69, C71, C87, and C90 each contribute to the Zn(2+) site. D493, D495, and D497 together coordinate Mg(2+).

The protein belongs to the RNA polymerase beta' chain family. RpoC1 subfamily. In terms of assembly, in plastids the minimal PEP RNA polymerase catalytic core is composed of four subunits: alpha, beta, beta', and beta''. When a (nuclear-encoded) sigma factor is associated with the core the holoenzyme is formed, which can initiate transcription. The cofactor is Mg(2+). Zn(2+) serves as cofactor.

Its subcellular location is the plastid. It localises to the chloroplast. It carries out the reaction RNA(n) + a ribonucleoside 5'-triphosphate = RNA(n+1) + diphosphate. DNA-dependent RNA polymerase catalyzes the transcription of DNA into RNA using the four ribonucleoside triphosphates as substrates. The chain is DNA-directed RNA polymerase subunit beta' from Angiopteris evecta (Mule's foot fern).